We begin with the raw amino-acid sequence, 326 residues long: Putative cell agglutination protein pfl9 (326 aa).

Positions 1 to 21 are cleaved as a signal peptide; the sequence is MNVVKYIIFSFALAPLLLVNA. A glycan (N-linked (GlcNAc...) asparagine) is linked at Asn25. A run of 2 repeats spans residues 103-137 and 138-175. Positions 103-175 are 2 X 36 AA approximate tandem repeats; the sequence is STITTTITSG…GEVEVITPSC (73 aa). The region spanning 164 to 326 is the DIPSY domain; it reads QSGEVEVITP…RANDVTLQLY (163 aa).

This sequence belongs to the mam3/map4 family.

It localises to the cell surface. In terms of biological role, may be involved in agglutination during conjugation or other aspects of colony formation. Induces flocculation when overexpressed. The sequence is that of Putative cell agglutination protein pfl9 from Schizosaccharomyces pombe (strain 972 / ATCC 24843) (Fission yeast).